The chain runs to 680 residues: HEAT repeat-containing protein 3 (680 aa).

Basic residues predominate over residues Met-1–Arg-11. Residues Met-1–Pro-39 are disordered. The residue at position 15 (Ser-15) is a Phosphoserine. The span at Gly-18–Asn-29 shows a compositional bias: low complexity. 2 HEAT repeats span residues Gly-38–Arg-69 and Gly-74–Gly-110. Ser-144 is modified (phosphoserine). Thr-340 carries the phosphothreonine modification.

It belongs to the nuclear import and ribosome assembly adapter family. Component of a hexameric 5S RNP precursor complex, composed of 5S RNA, RRS1, RPF2/BXDC1, RPL5, RPL11 and HEATR3; this complex acts as a precursor for ribosome assembly.

Its function is as follows. Plays a role in ribosome biogenesis and in nuclear import of the 60S ribosomal protein L5/large ribosomal subunit protein uL18 (RPL5). Required for proper erythrocyte maturation. This Homo sapiens (Human) protein is HEAT repeat-containing protein 3 (HEATR3).